A 182-amino-acid chain; its full sequence is Putative manganese efflux pump MntP (182 aa).

Helical transmembrane passes span 6–26, 37–57, 71–91, 101–121, 131–151, and 162–182; these read LIPL…VSLG, ILYI…IGMV, HFAG…SSIL, IGIS…SVGL, VITI…GLFI, and YGEI…LFPI.

Belongs to the MntP (TC 9.B.29) family.

The protein localises to the cell membrane. Probably functions as a manganese efflux pump. The chain is Putative manganese efflux pump MntP from Bacillus cereus (strain AH187).